The following is a 229-amino-acid chain: Cytochrome c oxidase subunit 2 (229 aa).

The Mitochondrial intermembrane segment spans residues methionine 1–histidine 26. A helical transmembrane segment spans residues threonine 27–asparagine 48. Over threonine 49–glutamate 62 the chain is Mitochondrial matrix. A helical membrane pass occupies residues phenylalanine 63–histidine 82. Over leucine 83–serine 229 the chain is Mitochondrial intermembrane. Positions 161, 196, 198, 200, 204, and 207 each coordinate Cu cation. Glutamate 198 is a binding site for Mg(2+).

Belongs to the cytochrome c oxidase subunit 2 family. As to quaternary structure, component of the cytochrome c oxidase (complex IV, CIV), a multisubunit enzyme composed of a catalytic core of 3 subunits and several supernumerary subunits. The complex exists as a monomer or a dimer and forms supercomplexes (SCs) in the inner mitochondrial membrane with ubiquinol-cytochrome c oxidoreductase (cytochrome b-c1 complex, complex III, CIII). The cofactor is Cu cation.

Its subcellular location is the mitochondrion inner membrane. It catalyses the reaction 4 Fe(II)-[cytochrome c] + O2 + 8 H(+)(in) = 4 Fe(III)-[cytochrome c] + 2 H2O + 4 H(+)(out). In terms of biological role, component of the cytochrome c oxidase, the last enzyme in the mitochondrial electron transport chain which drives oxidative phosphorylation. The respiratory chain contains 3 multisubunit complexes succinate dehydrogenase (complex II, CII), ubiquinol-cytochrome c oxidoreductase (cytochrome b-c1 complex, complex III, CIII) and cytochrome c oxidase (complex IV, CIV), that cooperate to transfer electrons derived from NADH and succinate to molecular oxygen, creating an electrochemical gradient over the inner membrane that drives transmembrane transport and the ATP synthase. Cytochrome c oxidase is the component of the respiratory chain that catalyzes the reduction of oxygen to water. Electrons originating from reduced cytochrome c in the intermembrane space (IMS) are transferred via the dinuclear copper A center (CU(A)) of subunit 2 and heme A of subunit 1 to the active site in subunit 1, a binuclear center (BNC) formed by heme A3 and copper B (CU(B)). The BNC reduces molecular oxygen to 2 water molecules using 4 electrons from cytochrome c in the IMS and 4 protons from the mitochondrial matrix. The polypeptide is Cytochrome c oxidase subunit 2 (COII) (Oncopeltus fasciatus (Large milkweed bug)).